The chain runs to 295 residues: MMQIPFTRIFKVIFVLSTIVAVTDCCSSRILLLREHTLKIVQHQHSHMHEHAHELQQQIQETAVELLNRLELQRKQLEASAQEEADQLHPDTDPNPDSGGQLPNADDSIAADPEQDGIILGSSTDTWLASESSTPITDSETVTTPETVTHTGEPPPDPSSSSTPDSTTPSPNDKETEIQMLPCSEAYNTSFCLNGGHCFQHPMVNNTVFHSCLCVNDYDGERCAYKSWNGDYIYSPPTAQRKVRMAHIVFSFPVLLMLSSLYVLFAAVFMLRNVPDYRRKQQQLHLHKQRFFVRC.

The signal sequence occupies residues 1–26; that stretch reads MMQIPFTRIFKVIFVLSTIVAVTDCC. Residues 27–247 are Extracellular-facing; the sequence is SSRILLLREH…TAQRKVRMAH (221 aa). 2 disordered regions span residues 78–111 and 124–175; these read EASAQEEADQLHPDTDPNPDSGGQLPNADDSIAA and TDTW…NDKE. Polar residues predominate over residues 124–139; sequence TDTWLASESSTPITDS. 2 stretches are compositionally biased toward low complexity: residues 140–152 and 159–171; these read ETVTTPETVTHTG and SSSSTPDSTTPSP. The 46-residue stretch at 179–224 folds into the EGF-like domain; sequence QMLPCSEAYNTSFCLNGGHCFQHPMVNNTVFHSCLCVNDYDGERCA. Disulfide bonds link cysteine 183-cysteine 198, cysteine 192-cysteine 212, and cysteine 214-cysteine 223. 2 N-linked (GlcNAc...) asparagine glycosylation sites follow: asparagine 188 and asparagine 205. The interval 215-245 is interaction with cni; sequence VNDYDGERCAYKSWNGDYIYSPPTAQRKVRM. Residues 248-268 traverse the membrane as a helical segment; the sequence is IVFSFPVLLMLSSLYVLFAAV. The Cytoplasmic portion of the chain corresponds to 269 to 295; the sequence is FMLRNVPDYRRKQQQLHLHKQRFFVRC.

Interacts with cni. As to expression, expressed in nurse cells and oocyte up to oogenesis stage 7. Specifically accumulates in dorsal anterior corner of the oocyte during stages 9/10, at later stages expression is seen as an anterior ring. In stage 10 ovaries, it is concentrated between the oocyte nucleus and the adjacent oolemma. During vitellogenesis stage it can be detected at the oocyte surface, especially on the microvilli. It is also found at the microvilli covering the apical surface of the follicular epithelium and within follicle cells.

It is found in the cell membrane. Functionally, critical for defining the anterior-posterior and dorsal-ventral axes of the egg. May signal directly to dorsal follicle cells through the receptor torpedo (top). During oogenesis this signaling pathway instructs follicle cells to follow a dorsal pathway of development rather than the default ventral pathway. The polypeptide is Protein gurken (grk) (Drosophila melanogaster (Fruit fly)).